The primary structure comprises 815 residues: Probable E3 ubiquitin-protein ligase hulA (815 aa).

Residues 1-112 (MGSNLPSQPN…EMGGDEMLTR (112 aa)) form the C2 domain. 2 disordered regions span residues 134–237 (NLST…GWER) and 253–353 (RTTT…YFVD). Low complexity-rich tracts occupy residues 165 to 185 (ASAAHPAASPAPIDPAASNPS) and 202 to 212 (APGAAAGATPT). 2 stretches are compositionally biased toward polar residues: residues 213–226 (NTQGSRTNLSSFED) and 253–270 (RTTTWTRPSSNYNEQTQR). Residues 229–262 (GRLPAGWERREDNLGRTYYVDHNTRTTTWTRPSS) form the WW 1 domain. A compositionally biased stretch (basic and acidic residues) spans 279 to 294 (LERRAHQSRMLPEDRT). Residues 295-308 (GANSPNLPETSQQA) show a composition bias toward polar residues. The segment covering 324-333 (ATGATTAGTG) has biased composition (low complexity). 2 consecutive WW domains span residues 333–366 (GELPPGWEQRTTPEGRPYFVDHNTRTTTWVDPRR) and 393–426 (GPLPSGWEMRLTNTARVYFVDHNTKTTTWDDPRL). Residues 482–815 (SASDLKKRLM…VEETLGFGQE (334 aa)) enclose the HECT domain. C783 (glycyl thioester intermediate) is an active-site residue.

This sequence belongs to the RSP5/NEDD4 family. In terms of assembly, interacts with creD.

The protein localises to the cytoplasm. The catalysed reaction is S-ubiquitinyl-[E2 ubiquitin-conjugating enzyme]-L-cysteine + [acceptor protein]-L-lysine = [E2 ubiquitin-conjugating enzyme]-L-cysteine + N(6)-ubiquitinyl-[acceptor protein]-L-lysine.. Its pathway is protein modification; protein ubiquitination. Its function is as follows. E3 ubiquitin-protein ligase which accepts ubiquitin from an E2 ubiquitin-conjugating enzyme in the form of a thioester and then directly transfers the ubiquitin to targeted substrates. Probably involved in the regulatory network controlling carbon source utilization. In Aspergillus clavatus (strain ATCC 1007 / CBS 513.65 / DSM 816 / NCTC 3887 / NRRL 1 / QM 1276 / 107), this protein is Probable E3 ubiquitin-protein ligase hulA (hulA).